Reading from the N-terminus, the 186-residue chain is Small ribosomal subunit protein uS5 (186 aa).

The 64-residue stretch at 20–83 (FVDKLVHINR…EAAKRDMIFV (64 aa)) folds into the S5 DRBM domain.

Belongs to the universal ribosomal protein uS5 family. As to quaternary structure, part of the 30S ribosomal subunit. Contacts proteins S4 and S8.

Its function is as follows. With S4 and S12 plays an important role in translational accuracy. In terms of biological role, located at the back of the 30S subunit body where it stabilizes the conformation of the head with respect to the body. In Brucella ovis (strain ATCC 25840 / 63/290 / NCTC 10512), this protein is Small ribosomal subunit protein uS5.